We begin with the raw amino-acid sequence, 329 residues long: Acetyl-coenzyme A carboxylase carboxyl transferase subunit alpha (329 aa).

The region spanning Gln40–Glu294 is the CoA carboxyltransferase C-terminal domain.

Belongs to the AccA family. In terms of assembly, acetyl-CoA carboxylase is a heterohexamer composed of biotin carboxyl carrier protein (AccB), biotin carboxylase (AccC) and two subunits each of ACCase subunit alpha (AccA) and ACCase subunit beta (AccD).

Its subcellular location is the cytoplasm. The enzyme catalyses N(6)-carboxybiotinyl-L-lysyl-[protein] + acetyl-CoA = N(6)-biotinyl-L-lysyl-[protein] + malonyl-CoA. It functions in the pathway lipid metabolism; malonyl-CoA biosynthesis; malonyl-CoA from acetyl-CoA: step 1/1. Component of the acetyl coenzyme A carboxylase (ACC) complex. First, biotin carboxylase catalyzes the carboxylation of biotin on its carrier protein (BCCP) and then the CO(2) group is transferred by the carboxyltransferase to acetyl-CoA to form malonyl-CoA. In Prochlorococcus marinus (strain NATL2A), this protein is Acetyl-coenzyme A carboxylase carboxyl transferase subunit alpha.